The chain runs to 462 residues: MDAMQKTIEYTSVSRIAGPLMVIDGIEGVAYGEIVDITTPNGEKRTGQVLEAREEIAVVQVFEGTSELNTSETKVRFTGDTAKIGVSYDMLGRIFNGAGKPLDGGPEIIAEKKLDINGYPLNPVSRNPPNAFVQTGISTIDGTNTLVRGQKIPIFSGSGLPHNKLATQIARQAKVRGEGEQFAVVFAAMGITGEESNYFMDEFKKTGALEKAVVFINLADDPAIERILTPRIALTTAEYLAYEKGMHVLVILTDLTNYCEALREIAAARNEVPGRRGYPGYMYTDLACLYERAGRVKGREGTVTQIPILTMPDDDITHPIPDLTGYITEGQIVLSRELNRKGIYPPVDILPSLSRLAGNGQGEGKTRDDHSKVISQAYAAYAEGRGLRDLVAVVGEEALTERDRSFLKFADAFENSIVTQGVDEDRSIEETLDYVWDLLTILPREELKRVSDELIEKYLPKK.

The protein belongs to the ATPase alpha/beta chains family. In terms of assembly, has multiple subunits with at least A(3), B(3), C, D, E, F, H, I and proteolipid K(x).

It is found in the cell membrane. In terms of biological role, component of the A-type ATP synthase that produces ATP from ADP in the presence of a proton gradient across the membrane. The B chain is a regulatory subunit. The polypeptide is A-type ATP synthase subunit B (Methanococcus maripaludis (strain C6 / ATCC BAA-1332)).